A 3414-amino-acid polypeptide reads, in one-letter code: MAGKAILKGKGGGPPRRVSKETAKKTRQRVVQMPNGLVLKRIMEILWHAMVGTARSPLLKSFWKVVPLKQAMAALRKIKKAVSTLMIGLQKRGKRRSTTDWTGWLLVAMLLSIALAATVRKEGDGTTVIRAEGKDAATQVRVENGTCVILATDMGAWCEDSLSYECVTIDQGEEPVDVDCFCRNVDRVYLEYGRCGKQEGTRSRRSVLIPSHAQKDLTGRGQRWLEGDTIRSHLTRVEGWVWKNKSLTLAVVVIVWMTVESAVTRIVIVSALLCLAPAYASRCTHLENRDFVTGTQGTTRVTLVLELGGCVTITAEGKPSMDVWLDSIYQENPAKTREYCLHAKLSNTKVAARCPAMGPATLDEEHQSGTVCKRDQSDRGWGNHCGLFGKGSIVTCVKASCEAKKKATGHVYDANKIVYTVKVEPHTGNYVAANETHSGRKTALFTVSSEKTILTMGEYGDVSLMCRVASGVDLAQTVVLELDKTAEHLPTAWQVHRDWFNDLALPWKHEGMVGWNNAERLVEFGVPHAVKMDVYNLGDQTGVLLKSLAGAPLAHIEGTKYHLKSGHVTCEVGLEKLKMKGLTYTMCDKAKFTWKRAPTDSGHDTVVMEVAFSGTKPCRIPVRAVAHGSPDVDVAMLITPNPTIENNGGGFIEMQLPPGDNIIYVGELKHQWFQKGSSIGRVFQKTRKGIERLTVLGEHAWDFGSTGGFLSSIGKALHTVLGGAFNSVFGGVGFLPRILLGISLAWLGLNMRNPTMSMSFLLAGGLVLTMTLGVGADVGCAVDTERMELRCGEGLVVWREVSEWYDNYAFYPETPAALASALKEMVEEGDCGIVPQNRLEMAMWRSSVSELNLALAEGDANLTVVVDKHDPTDYRGGVPGLLKKGKDMKISWKSWGQSMIWSVPEAPRRFLVGTEGSSECPLAKRRTGVFTVAEFGMGLRTKVFLDFRQEITRECDTGVMGAAVKNGIAVHTDQSLWMKSIRNETGTYIVELLVTDLRNCSWPASHTIDNADVVDSELFLPASLAGPRSWYNRIPGYSEQVRGPWKYTPIKITREECPGTKVAIDASCDKRGASVRSTSESGKIIPEWCCRKCTLPPVTFRTGTDCWYAMEIRPVHDQGGLVRSMVVADNGELLSEGGIPGIVAVFVVLEYIIRKRPSAGLTVVWGGVVVLALLVTGMVTLQSMLRYVIAVGVTFHLELGPEIVALMLLQAVFELRVGLLGAFVLRRSLTTREVVTIYFLLLVLELGLPSANLEALWGWADALAMGAMIFRACTAEGKTGLGLLLVALMTQQNAVIVHQGLVIFLSVASACSVWKLLRGQREQKGLSWIVPLAGRLGGKGSGIRLLAFWELASRRDRRSFSEPLTVVGVMLTLASGMMRHTSQEALCALAAASFLLLMLVLGTRKMQLVAEWSGCVEWHPDLADEGGEISLRVRQDALGNFHLTELEKEERMMAFWLLAGLTASALHWTGILVVMGLWTMSEMLRSARRSDLVFSGQSGSERGSQPFEVRDGVYRILSPGLLWGHRQVGVGFGSKGVLHTMWHVTRGAAIFIDNAVAGPYWADVKEDVVCYGGAWSLEEKWKGEKVQVHAFPPGRAHEVHQCQPGELVLDTGRRIGAIPIDLAKGTSGSPILNAQGAVVGLYGNGLRTNETYVSSIAQGEVEKSRPNLPQAVVGTGWTSKGTITVLDMHPGSGKTHRVLPELIRQCIDKRLRTLVLAPTRVVLKEMERALSGKRVRFHSPAVGDQQTGNAIVDVMCHATYVNRRLLPQGRQNWEVAIMDEAHWTDPHSIAARGHLYSMAKENKCALVLMTATPPGKSEPFPESNGAITSEERQIPEGEWRDGFDWITEYEGRTAWFVPSIAKGGVIARTLRQKGKSVICLNSKTFEKDYSRVRDEKPDFVVTTDISEMGANLDVSRVIDGRTNIKPEEVDGKVELTGTRRVTTASAAQRRGRVGRHDGRTDEYIYSGQCDDDDSGLVQWKEAQILLDNITTLRGPVATFYGPEQDKMPEVAGHFRLTEERRKHFRHLLTHCDFTPWLAWHVAANVSNVTSRSWTWEGPEENAVDEANGDLVTFKSPNGAERTLRPVWRDARMFKEGRDIREFVAYASGRRSLGDMLTGMSGVPELLRHRCMSAMDVFYTLLYEEPGSRAMKMAERDAPEAFLTMVEMVVLGLATLGAVWCLVLRTSISRMMLGTMVLLVSLALLWAGGVGYGSMAGVALVFYTLLTVLQPEAGKQRSSDDNKLAYFLLTLCSLAGLVAANEMGFLEKTKADLSAVLWSEREEPRVWSEWTNIDIQPAKSWGTYVLVVSLFTPYIIHQLQTRIQQLVNSAVASGAQAMRDLGGGTPFFGVAGHVLTLGVVSLVGATPTSLVVGVGLAAFHLAIVVSGLEAELTQRAHKVFFSAMVRNPMVDGDVINPFGDGEVKPALYERKMSLILAMILCFMSVVLNRTVPAVTEASAVGLAAAGQLIRPEADTLWTMPVACGLSGVVRGSLWGFLPLGHRLWLRTSGTRRGGSEGDTLGDLWKRRLNNCTKEEFFAYRRTGILETERDKARELLKKGETNMGLAVSRGTAKLAWLEERGYVNLKGEVVDLGCGRGGWSYYAASRPAVMGVKAYTIGGKGHEVPRMVTSLGWNLIKFRAGMNVFTMQPHRADTVMCDIGESSPDAAIEGERTRKVILLMEQWKNRNPTAACVFKVLAPYRPEVIEALHRFQLQWGGGLVRTPFSRNSTHEMYYSTAISGNIVNSVNVQSRKLLARFGDQRGPIRVPEMDLGVGTRCVVLAEDKVKEHDVQERIKALQEQYSDTWHVDREHPYRTWQYWGSYRTAPTGSAASLINGVVKLLSWPWNAREDVVRMAMTDTTAFGQQRVFKDKVDTKAQEPQPGTRVIMRAVNDWMFERLARRSRPRMCSREEFIAKVKANAALGAWSDEQNKWASAKEAVEDPAFWHLVDEERERHLKGRCAHCVYNMMGKREKKLGEFGVAKGSRAIWYMWLGSRFLEFEALGFLNEDHWASRESSGAGVEGISLNYLGWHLKKLSLLEGGLFYADDTAGWDTRVTNADLEDEEQILRYMEGEHKQLAATVMQKAYHAKVVKVARPSRDGGCIMDVITRRDQRGSGQVVTYALNTLTNIKVQLIRMMEGEGVIEATDSHNPRLLRVERWLRDHGEERLGRMLISGDDCVVRPIDDRFSKALYFLNDMAKTRKDIGEWEHSAGFSSWEEVPFCSHHFHELVMKDGRTLVVPCRDQDELVGRARVSPGCGWSVRETACLSKAYGQMWLLSYFHRRDLRTLGFAICSAVPKDWVPTGRTTWSVHASGAWMTTENMLDVWNRVWILDNPFMENKEKVGEWRDIPYLPKSQDMMCSSLVGRRERAEWAKNIWGAVEKVRKMLGPERYSDYLSCMDRHELHWELKVESSII.

Residues 1–27 (MAGKAILKGKGGGPPRRVSKETAKKTR) are disordered. Residues 1 to 98 (MAGKAILKGK…LQKRGKRRST (98 aa)) are Cytoplasmic-facing. The propeptide at 98 to 116 (TTDWTGWLLVAMLLSIALA) is ER anchor for the capsid protein C, removed in mature form by serine protease NS3. A helical transmembrane segment spans residues 99 to 119 (TDWTGWLLVAMLLSIALAATV). Topologically, residues 120–242 (RKEGDGTTVI…HLTRVEGWVW (123 aa)) are extracellular. N-linked (GlcNAc...) asparagine; by host glycosylation is present at Asn144. The helical transmembrane segment at 243–260 (KNKSLTLAVVVIVWMTVE) threads the bilayer. A topological domain (cytoplasmic) is located at residue Ser261. A helical transmembrane segment spans residues 262 to 280 (AVTRIVIVSALLCLAPAYA). Residues 281 to 727 (SRCTHLENRD…HTVLGGAFNS (447 aa)) are Extracellular-facing. 6 cysteine pairs are disulfide-bonded: Cys283/Cys310, Cys340/Cys396, Cys340/Cys401, Cys354/Cys385, Cys372/Cys396, and Cys372/Cys401. The tract at residues 378–391 (DRGWGNHCGLFGKG) is fusion peptide. A glycan (N-linked (GlcNAc...) asparagine; by host) is linked at Asn434. 2 disulfide bridges follow: Cys466-Cys570 and Cys587-Cys618. The helical transmembrane segment at 728–748 (VFGGVGFLPRILLGISLAWLG) threads the bilayer. Residues 749 to 755 (LNMRNPT) lie on the Cytoplasmic side of the membrane. A helical transmembrane segment spans residues 756-776 (MSMSFLLAGGLVLTMTLGVGA). The Extracellular segment spans residues 777–1132 (DVGCAVDTER…RSMVVADNGE (356 aa)). 6 disulfides stabilise this stretch: Cys780–Cys791, Cys831–Cys920, Cys955–Cys1000, Cys1057–Cys1106, Cys1068–Cys1090, and Cys1089–Cys1093. N-linked (GlcNAc...) asparagine; by host glycosylation is found at Asn861, Asn983, and Asn999. The chain crosses the membrane as a helical span at residues 1133–1153 (LLSEGGIPGIVAVFVVLEYII). Topologically, residues 1154–1158 (RKRPS) are cytoplasmic. A helical membrane pass occupies residues 1159-1179 (AGLTVVWGGVVVLALLVTGMV). Over 1180–1187 (TLQSMLRY) the chain is Lumenal. Residues 1188–1208 (VIAVGVTFHLELGPEIVALML) traverse the membrane as a helical segment. Residues 1209-1236 (LQAVFELRVGLLGAFVLRRSLTTREVVT) are Cytoplasmic-facing. The chain crosses the membrane as a helical span at residues 1237–1257 (IYFLLLVLELGLPSANLEALW). Over 1258 to 1293 (GWADALAMGAMIFRACTAEGKTGLGLLLVALMTQQN) the chain is Lumenal. Residues 1294-1314 (AVIVHQGLVIFLSVASACSVW) form a helical membrane-spanning segment. The Cytoplasmic segment spans residues 1315-1363 (KLLRGQREQKGLSWIVPLAGRLGGKGSGIRLLAFWELASRRDRRSFSEP). The helical transmembrane segment at 1364–1381 (LTVVGVMLTLASGMMRHT) threads the bilayer. Residue Ser1382 is a topological domain, lumenal. A helical transmembrane segment spans residues 1383–1403 (QEALCALAAASFLLLMLVLGT). Residues 1404 to 1454 (RKMQLVAEWSGCVEWHPDLADEGGEISLRVRQDALGNFHLTELEKEERMMA) are Cytoplasmic-facing. Positions 1410 to 1449 (AEWSGCVEWHPDLADEGGEISLRVRQDALGNFHLTELEKE) are interacts with and activates NS3 protease. The helical intramembrane region spans 1455–1475 (FWLLAGLTASALHWTGILVVM). Residues 1476–2160 (GLWTMSEMLR…KMAERDAPEA (685 aa)) are Cytoplasmic-facing. The 180-residue stretch at 1490–1669 (SDLVFSGQSG…EVEKSRPNLP (180 aa)) folds into the Peptidase S7 domain. Catalysis depends on charge relay system; for serine protease NS3 activity residues His1543, Asp1567, and Ser1627. Residues 1675–1831 (TGWTSKGTIT…ESNGAITSEE (157 aa)) form the Helicase ATP-binding domain. Residue 1688 to 1695 (MHPGSGKT) participates in ATP binding. Positions 1779–1782 (DEAH) match the DEAH box motif. A Helicase C-terminal domain is found at 1841–2000 (DGFDWITEYE…TLRGPVATFY (160 aa)). Lys1883 carries the post-translational modification N6-acetyllysine; by host. A helical membrane pass occupies residues 2161–2181 (FLTMVEMVVLGLATLGAVWCL). The Lumenal segment spans residues 2182–2189 (VLRTSISR). The helical intramembrane region spans 2190–2210 (MMLGTMVLLVSLALLWAGGVG). A topological domain (lumenal) is located at residue Tyr2211. A helical membrane pass occupies residues 2212–2232 (GSMAGVALVFYTLLTVLQPEA). Residues 2233–2244 (GKQRSSDDNKLA) lie on the Cytoplasmic side of the membrane. Residues 2245-2265 (YFLLTLCSLAGLVAANEMGFL) traverse the membrane as a helical segment. The Lumenal segment spans residues 2266 to 2299 (EKTKADLSAVLWSEREEPRVWSEWTNIDIQPAKS). Residues 2300–2320 (WGTYVLVVSLFTPYIIHQLQT) constitute an intramembrane region (helical). At 2321–2343 (RIQQLVNSAVASGAQAMRDLGGG) the chain is on the lumenal side. The helical intramembrane region spans 2344-2364 (TPFFGVAGHVLTLGVVSLVGA). The Lumenal segment spans residues 2365 to 2368 (TPTS). The chain crosses the membrane as a helical span at residues 2369-2389 (LVVGVGLAAFHLAIVVSGLEA). Topologically, residues 2390–2432 (ELTQRAHKVFFSAMVRNPMVDGDVINPFGDGEVKPALYERKMS) are cytoplasmic. A helical membrane pass occupies residues 2433–2453 (LILAMILCFMSVVLNRTVPAV). Over 2454–2477 (TEASAVGLAAAGQLIRPEADTLWT) the chain is Lumenal. Residues 2478 to 2498 (MPVACGLSGVVRGSLWGFLPL) traverse the membrane as a helical segment. Topologically, residues 2499–3414 (GHRLWLRTSG…WELKVESSII (916 aa)) are cytoplasmic. Residues 2512 to 2776 (GGSEGDTLGD…EMDLGVGTRC (265 aa)) enclose the mRNA cap 0-1 NS5-type MT domain. Ser2567 contacts S-adenosyl-L-methionine. Position 2567 is a phosphoserine (Ser2567). The active-site For 2'-O-MTase activity is Lys2572. Residues Gly2597, Trp2598, Thr2615, Ile2616, and Val2643 each contribute to the S-adenosyl-L-methionine site. The active-site For 2'-O-MTase activity is the Asp2657. Ile2658 contributes to the S-adenosyl-L-methionine binding site. Catalysis depends on for 2'-O-MTase activity residues Lys2694 and Glu2730. Residues 2730-2734 (EMYYS) form an interaction with host SCRIB region. Tyr2732 is a binding site for S-adenosyl-L-methionine. Zn(2+) contacts are provided by Glu2950, His2954, Cys2959, and Cys2962. A RdRp catalytic domain is found at 3040–3189 (GLFYADDTAG…RPIDDRFSKA (150 aa)). Zn(2+)-binding residues include His3224, Cys3240, and Cys3359.

This sequence in the N-terminal section; belongs to the class I-like SAM-binding methyltransferase superfamily. mRNA cap 0-1 NS5-type methyltransferase family. As to quaternary structure, homodimer. In terms of assembly, forms heterodimers with envelope protein E in the endoplasmic reticulum and Golgi. Homodimer; in the endoplasmic reticulum and Golgi. As to quaternary structure, forms homodimers as well as homohexamers. NS1 may interact with NS4A. In terms of assembly, forms a heterodimer with serine protease NS3. May form homooligomers. Forms a heterodimer with NS2B. Interacts with NS4B. Interacts with unphosphorylated RNA-directed RNA polymerase NS5; this interaction stimulates RNA-directed RNA polymerase NS5 guanylyltransferase activity. As to quaternary structure, interacts with serine protease NS3. In terms of assembly, interacts with host STAT2; this interaction inhibits the phosphorylation of the latter, and, when all viral proteins are present (polyprotein), targets STAT2 for degradation. In terms of processing, specific enzymatic cleavages in vivo yield mature proteins. Cleavages in the lumen of endoplasmic reticulum are performed by host signal peptidase, whereas cleavages in the cytoplasmic side are performed by serine protease NS3. Signal cleavage at the 2K-4B site requires a prior NS3 protease-mediated cleavage at the 4A-2K site. Post-translationally, cleaved in post-Golgi vesicles by a host furin, releasing the mature small envelope protein M, and peptide pr. This cleavage is incomplete as up to 30% of viral particles still carry uncleaved prM. N-glycosylated. In terms of processing, N-glycosylated. The excreted form is glycosylated and this is required for efficient secretion of the protein from infected cells. Post-translationally, acetylated by host KAT5. Acetylation modulates NS3 RNA-binding and unwinding activities and plays an important positive role for viral replication. Phosphorylated on serines residues. This phosphorylation may trigger NS5 nuclear localization.

The protein resides in the virion. Its subcellular location is the host nucleus. It is found in the host cytoplasm. The protein localises to the host perinuclear region. It localises to the secreted. The protein resides in the virion membrane. Its subcellular location is the host endoplasmic reticulum membrane. It carries out the reaction Selective hydrolysis of -Xaa-Xaa-|-Yaa- bonds in which each of the Xaa can be either Arg or Lys and Yaa can be either Ser or Ala.. The catalysed reaction is RNA(n) + a ribonucleoside 5'-triphosphate = RNA(n+1) + diphosphate. The enzyme catalyses a ribonucleoside 5'-triphosphate + H2O = a ribonucleoside 5'-diphosphate + phosphate + H(+). It catalyses the reaction ATP + H2O = ADP + phosphate + H(+). It carries out the reaction a 5'-end (5'-triphosphoguanosine)-ribonucleoside in mRNA + S-adenosyl-L-methionine = a 5'-end (N(7)-methyl 5'-triphosphoguanosine)-ribonucleoside in mRNA + S-adenosyl-L-homocysteine. The catalysed reaction is a 5'-end (N(7)-methyl 5'-triphosphoguanosine)-ribonucleoside in mRNA + S-adenosyl-L-methionine = a 5'-end (N(7)-methyl 5'-triphosphoguanosine)-(2'-O-methyl-ribonucleoside) in mRNA + S-adenosyl-L-homocysteine + H(+). Its function is as follows. Plays a role in virus budding by binding to the cell membrane and gathering the viral RNA into a nucleocapsid that forms the core of a mature virus particle. During virus entry, may induce genome penetration into the host cytoplasm after hemifusion induced by the surface proteins. Can migrate to the cell nucleus where it modulates host functions. Functionally, inhibits RNA silencing by interfering with host Dicer. In terms of biological role, prevents premature fusion activity of envelope proteins in trans-Golgi by binding to envelope protein E at pH6.0. After virion release in extracellular space, gets dissociated from E dimers. Acts as a chaperone for envelope protein E during intracellular virion assembly by masking and inactivating envelope protein E fusion peptide. prM is the only viral peptide matured by host furin in the trans-Golgi network probably to avoid catastrophic activation of the viral fusion activity in acidic Golgi compartment prior to virion release. prM-E cleavage is inefficient, and many virions are only partially matured. These uncleaved prM would play a role in immune evasion. Its function is as follows. May play a role in virus budding. Exerts cytotoxic effects by activating a mitochondrial apoptotic pathway through M ectodomain. May display a viroporin activity. Functionally, binds to host cell surface receptor and mediates fusion between viral and cellular membranes. Envelope protein is synthesized in the endoplasmic reticulum in the form of heterodimer with protein prM. They play a role in virion budding in the ER, and the newly formed immature particle is covered with 60 spikes composed of heterodimer between precursor prM and envelope protein E. The virion is transported to the Golgi apparatus where the low pH causes dissociation of PrM-E heterodimers and formation of E homodimers. prM-E cleavage is inefficient, and many virions are only partially matured. These uncleaved prM would play a role in immune evasion. In terms of biological role, involved in immune evasion, pathogenesis and viral replication. Once cleaved off the polyprotein, is targeted to three destinations: the viral replication cycle, the plasma membrane and the extracellular compartment. Essential for viral replication. Required for formation of the replication complex and recruitment of other non-structural proteins to the ER-derived membrane structures. Excreted as a hexameric lipoparticle that plays a role against host immune response. Antagonizing the complement function. Binds to the host macrophages and dendritic cells. Inhibits signal transduction originating from Toll-like receptor 3 (TLR3). Component of the viral RNA replication complex that functions in virion assembly and antagonizes the host immune response. Its function is as follows. Required cofactor for the serine protease function of NS3. May have membrane-destabilizing activity and form viroporins. Functionally, displays three enzymatic activities: serine protease, NTPase and RNA helicase. NS3 serine protease, in association with NS2B, performs its autocleavage and cleaves the polyprotein at dibasic sites in the cytoplasm: C-prM, NS2A-NS2B, NS2B-NS3, NS3-NS4A, NS4A-2K and NS4B-NS5. NS3 RNA helicase binds RNA and unwinds dsRNA in the 3' to 5' direction. In terms of biological role, regulates the ATPase activity of the NS3 helicase activity. NS4A allows NS3 helicase to conserve energy during unwinding. Functions as a signal peptide for NS4B and is required for the interferon antagonism activity of the latter. Its function is as follows. Induces the formation of ER-derived membrane vesicles where the viral replication takes place. Inhibits interferon (IFN)-induced host STAT1 phosphorylation and nuclear translocation, thereby preventing the establishment of cellular antiviral state by blocking the IFN-alpha/beta pathway. Inhibits STAT2 translocation in the nucleus after IFN-alpha treatment. Functionally, replicates the viral (+) and (-) RNA genome, and performs the capping of genomes in the cytoplasm. NS5 methylates viral RNA cap at guanine N-7 and ribose 2'-O positions. Besides its role in RNA genome replication, also prevents the establishment of cellular antiviral state by blocking the interferon-alpha/beta (IFN-alpha/beta) signaling pathway. Inhibits host TYK2 and STAT2 phosphorylation, thereby preventing activation of JAK-STAT signaling pathway. This chain is Genome polyprotein, found in Homo sapiens (Human).